The sequence spans 102 residues: Small ribosomal subunit protein uS10 (102 aa).

The protein belongs to the universal ribosomal protein uS10 family. As to quaternary structure, part of the 30S ribosomal subunit.

Its function is as follows. Involved in the binding of tRNA to the ribosomes. The polypeptide is Small ribosomal subunit protein uS10 (Methanococcus maripaludis (strain C6 / ATCC BAA-1332)).